The sequence spans 429 residues: MLSKKQLRLDMKAVANALKKRYFYFDVDHLIELESNRKKNQIETQNLQNLRNMQSKAIGKAKASGEDIKSLLKNVSDLSTKLNLAKSNLQLIQSEIDVIVLSMPNIPHHSVPNGKSEEDNIEVSKWGKLVNYDFDVKDHVDLGAMYGLDFETAVKISGARFSVMTGKIARLHRALTQFMLDRHSEVNGYTEAYVPYLVNTESLIGTGQLPKFEADLFKTYLHGEKGETKTLYLIPTGEVPVTNMMRDMIIKENDLPLKFVTHTPSFRSEAGSYGRYTRGLIRQHQFEKVELVQVVKAQDSYQALEVLTTHAEDILQALELPYRKISLCAGDLGFSATKTYDLEVWLPGQNVYCEISSCSCFEDFQARRLQLRYKNKETNKLELLHTLNGSGLAVGRTLVAVLENHQQADRSIKIPFVLQSYMGGLEVMN.

236 to 238 (TGE) lines the L-serine pocket. Residue 267–269 (RSE) coordinates ATP. Residue glutamate 290 participates in L-serine binding. Residue 354–357 (EISS) coordinates ATP. Serine 390 serves as a coordination point for L-serine.

This sequence belongs to the class-II aminoacyl-tRNA synthetase family. Type-1 seryl-tRNA synthetase subfamily. Homodimer. The tRNA molecule binds across the dimer.

Its subcellular location is the cytoplasm. The catalysed reaction is tRNA(Ser) + L-serine + ATP = L-seryl-tRNA(Ser) + AMP + diphosphate + H(+). The enzyme catalyses tRNA(Sec) + L-serine + ATP = L-seryl-tRNA(Sec) + AMP + diphosphate + H(+). The protein operates within aminoacyl-tRNA biosynthesis; selenocysteinyl-tRNA(Sec) biosynthesis; L-seryl-tRNA(Sec) from L-serine and tRNA(Sec): step 1/1. Catalyzes the attachment of serine to tRNA(Ser). Is also able to aminoacylate tRNA(Sec) with serine, to form the misacylated tRNA L-seryl-tRNA(Sec), which will be further converted into selenocysteinyl-tRNA(Sec). The chain is Serine--tRNA ligase from Vesicomyosocius okutanii subsp. Calyptogena okutanii (strain HA).